We begin with the raw amino-acid sequence, 311 residues long: Meteorin-like protein (311 aa).

The span at 1-13 (MRGAARAAWGRAG) shows a compositional bias: low complexity. The interval 1-24 (MRGAARAAWGRAGQPWPRPPAPGP) is disordered. Residues 1 to 45 (MRGAARAAWGRAGQPWPRPPAPGPPPPPLPLLLLLLAGLLGGAGA) form the signal peptide. 5 cysteine pairs are disulfide-bonded: cysteine 52–cysteine 75, cysteine 107–cysteine 143, cysteine 188–cysteine 260, cysteine 191–cysteine 284, and cysteine 201–cysteine 306.

It belongs to the meteorin family. As to expression, highly expressed in the skeletal muscle, in subcutaneous adipose tissue, epididymal white adipose tissue depots and heart. Also expressed in brown adipose tissues and kidney.

It localises to the secreted. Hormone induced following exercise or cold exposure that promotes energy expenditure. Induced either in the skeletal muscle after exercise or in adipose tissue following cold exposure and is present in the circulation. Able to stimulate energy expenditure associated with the browning of the white fat depots and improves glucose tolerance. Does not promote an increase in a thermogenic gene program via direct action on adipocytes, but acts by stimulating several immune cell subtypes to enter the adipose tissue and activate their prothermogenic actions. Stimulates an eosinophil-dependent increase in IL4 expression and promotes alternative activation of adipose tissue macrophages, which are required for the increased expression of the thermogenic and anti-inflammatory gene programs in fat. Required for some cold-induced thermogenic responses, suggesting a role in metabolic adaptations to cold temperatures. The protein is Meteorin-like protein (METRNL) of Homo sapiens (Human).